Reading from the N-terminus, the 138-residue chain is Acidic phospholipase A2 VpaPLA2 (138 aa).

The N-terminal stretch at 1–16 (MRTLWIVAVCLMGVEG) is a signal peptide. Intrachain disulfides connect C42–C131, C44–C60, C59–C111, C65–C138, C66–C104, C73–C97, and C91–C102. Ca(2+) contacts are provided by Y43, G45, and G47. H63 is an active-site residue. Residue D64 participates in Ca(2+) binding. The active site involves D105.

Belongs to the phospholipase A2 family. Group II subfamily. D49 sub-subfamily. The cofactor is Ca(2+). As to expression, expressed by the venom gland.

It is found in the secreted. The catalysed reaction is a 1,2-diacyl-sn-glycero-3-phosphocholine + H2O = a 1-acyl-sn-glycero-3-phosphocholine + a fatty acid + H(+). Functionally, snake venom phospholipase A2 (PLA2) that causes a sudden decrease of arterial blood pressure when injected into rat, but is not lethal. When co-injected with an uncharacterized basic protein (which did not show any enzymatic activity, but also causes a drop in blood pressure), this synergistical mixture is lethal. PLA2 catalyzes the calcium-dependent hydrolysis of the 2-acyl groups in 3-sn-phosphoglycerides. This chain is Acidic phospholipase A2 VpaPLA2, found in Daboia palaestinae (Palestine viper).